The sequence spans 107 residues: MIYTTTETIPGRDIIEIVGVVTGNVVQSKHIGRDIMAGLKSIVGGEIRGYTEMLSDARDVAINRLVASAAQKGADAIVGIRFTTSAIMDGSSEIMAFGTAVKLGPSR.

It belongs to the UPF0145 family.

The polypeptide is UPF0145 protein Sfri_2095 (Shewanella frigidimarina (strain NCIMB 400)).